The primary structure comprises 362 residues: Heme A synthase (362 aa).

Helical transmembrane passes span 12-32 (AVKI…LVGG), 102-122 (VIGL…HLGG), 128-148 (LWLI…MVAS), 159-179 (ERLA…VWTL), and 198-218 (AAAL…VAGL). A heme-binding site is contributed by His-262. 3 consecutive transmembrane segments (helical) span residues 264–286 (MLAY…ARAG), 291–311 (GAVW…FTLL), and 314–334 (VPIG…MLGV). His-322 contributes to the heme binding site.

The protein belongs to the COX15/CtaA family. Type 2 subfamily. In terms of assembly, interacts with CtaB. Heme b serves as cofactor.

Its subcellular location is the cell membrane. The enzyme catalyses Fe(II)-heme o + 2 A + H2O = Fe(II)-heme a + 2 AH2. The protein operates within porphyrin-containing compound metabolism; heme A biosynthesis; heme A from heme O: step 1/1. Functionally, catalyzes the conversion of heme O to heme A by two successive hydroxylations of the methyl group at C8. The first hydroxylation forms heme I, the second hydroxylation results in an unstable dihydroxymethyl group, which spontaneously dehydrates, resulting in the formyl group of heme A. The protein is Heme A synthase of Rhodopseudomonas palustris (strain BisA53).